The primary structure comprises 89 residues: Putative membrane protein insertion efficiency factor (89 aa).

Residues 69 to 89 (DPVPPAHTERGGTMCPSRLPE) form a disordered region.

The protein belongs to the UPF0161 family.

It is found in the cell inner membrane. Functionally, could be involved in insertion of integral membrane proteins into the membrane. This chain is Putative membrane protein insertion efficiency factor, found in Paramagnetospirillum magneticum (strain ATCC 700264 / AMB-1) (Magnetospirillum magneticum).